Reading from the N-terminus, the 447-residue chain is Na(+)/H(+) antiporter NhaA 2 (447 aa).

Helical transmembrane passes span 34 to 54 (VGGV…NSPW), 77 to 97 (LTLG…VVGL), 115 to 135 (ALPI…FVLV), 146 to 166 (GWAI…AVIG), 176 to 196 (FLLT…AVFY), 200 to 220 (INGL…LCVQ), 290 to 310 (VSAG…SIGG), 321 to 341 (PITL…IVLT), 359 to 379 (WVDV…SLLI), and 393 to 413 (FVKI…AVVL).

This sequence belongs to the NhaA Na(+)/H(+) (TC 2.A.33) antiporter family.

Its subcellular location is the cell membrane. The enzyme catalyses Na(+)(in) + 2 H(+)(out) = Na(+)(out) + 2 H(+)(in). In terms of biological role, na(+)/H(+) antiporter that extrudes sodium in exchange for external protons. In Mycolicibacterium gilvum (strain PYR-GCK) (Mycobacterium gilvum (strain PYR-GCK)), this protein is Na(+)/H(+) antiporter NhaA 2.